We begin with the raw amino-acid sequence, 710 residues long: DNA ligase (710 aa).

Residues 1-36 form a disordered region; it reads MTSSSPRHADPDENPYVEAPPTDFEPVGALSEDEAT. Residues 63–67, 111–112, and Glu-147 contribute to the NAD(+) site; these read DETYD and SI. Lys-149 acts as the N6-AMP-lysine intermediate in catalysis. NAD(+)-binding residues include Arg-170, Glu-206, and Lys-353. Positions 444, 447, 460, and 466 each coordinate Zn(2+). The BRCT domain maps to 623–710; that stretch reads ETGDALDGLT…ERGVAWPPEE (88 aa). A disordered region spans residues 657–689; the sequence is ATSSVSGNTDYLVAGESPGRSKRDDADAEGVPV.

It belongs to the NAD-dependent DNA ligase family. LigA subfamily. Requires Mg(2+) as cofactor. The cofactor is Mn(2+).

It catalyses the reaction NAD(+) + (deoxyribonucleotide)n-3'-hydroxyl + 5'-phospho-(deoxyribonucleotide)m = (deoxyribonucleotide)n+m + AMP + beta-nicotinamide D-nucleotide.. Functionally, DNA ligase that catalyzes the formation of phosphodiester linkages between 5'-phosphoryl and 3'-hydroxyl groups in double-stranded DNA using NAD as a coenzyme and as the energy source for the reaction. It is essential for DNA replication and repair of damaged DNA. The protein is DNA ligase of Halorubrum lacusprofundi (strain ATCC 49239 / DSM 5036 / JCM 8891 / ACAM 34).